Here is a 1614-residue protein sequence, read N- to C-terminus: Chitin synthase csmA (1614 aa).

Residues 1–22 (MAGPAPSGRTPSHAQSSLPSLP) form a disordered region. The 788-residue stretch at 1–788 (MAGPAPSGRT…CWADLAKLGE (788 aa)) folds into the Myosin motor domain. Positions 9–19 (RTPSHAQSSLP) are enriched in polar residues. An ATP-binding site is contributed by 105–112 (GESGSGKT). A disordered region spans residues 600–650 (QVSSKPMRMPSMARRKAGPSRLAFDAPEGDDQDEYDSQAGSMSKSSARRKS). A compositionally biased stretch (acidic residues) spans 626–635 (PEGDDQDEYD). The tract at residues 668–692 (LDIVSKCLNSANLNPYFVFCLKPND) is actin-binding. Helical transmembrane passes span 898–918 (WMAI…KTFG) and 937–957 (LIIW…PGLI). The region spanning 961-1020 (QHVYSTAELSSHNGKDGHNSFVAIRGIVFNLDKFMPSHYPDIVPEKSLKKYAGTDATGLF) is the Cytochrome b5 heme-binding domain. N-linked (GlcNAc...) asparagine glycans are attached at residues asparagine 1047 and asparagine 1072. A helical transmembrane segment spans residues 1209–1229 (FILAISIFICLIVVFKFLAAL). N-linked (GlcNAc...) asparagine glycosylation is present at asparagine 1572.

The protein in the N-terminal section; belongs to the TRAFAC class myosin-kinesin ATPase superfamily. Myosin family. It in the C-terminal section; belongs to the chitin synthase family. Class V subfamily.

Its subcellular location is the cell membrane. It is found in the cell septum. The protein resides in the cell tip. The catalysed reaction is [(1-&gt;4)-N-acetyl-beta-D-glucosaminyl](n) + UDP-N-acetyl-alpha-D-glucosamine = [(1-&gt;4)-N-acetyl-beta-D-glucosaminyl](n+1) + UDP + H(+). Its function is as follows. Polymerizes chitin, a structural polymer of the cell wall and septum, by transferring the sugar moiety of UDP-GlcNAc to the non-reducing end of the growing chitin polymer. Acts as the major chitin synthase in Aspergillus niger involved in cell wall integrity which is principally responsible for chitin synthesis at the lateral cell wall. Plays an important role in septal growth or maintenance. Mediates colony spore formation. The chain is Chitin synthase csmA from Aspergillus niger (strain ATCC MYA-4892 / CBS 513.88 / FGSC A1513).